A 316-amino-acid chain; its full sequence is UDP-N-acetylenolpyruvoylglucosamine reductase (316 aa).

The FAD-binding PCMH-type domain occupies 30 to 194 (VGGEADYLVF…LSVKFALAPG (165 aa)). Residue R173 is part of the active site. Catalysis depends on S223, which acts as the Proton donor. E293 is an active-site residue.

This sequence belongs to the MurB family. FAD is required as a cofactor.

It localises to the cytoplasm. The enzyme catalyses UDP-N-acetyl-alpha-D-muramate + NADP(+) = UDP-N-acetyl-3-O-(1-carboxyvinyl)-alpha-D-glucosamine + NADPH + H(+). It participates in cell wall biogenesis; peptidoglycan biosynthesis. Functionally, cell wall formation. The chain is UDP-N-acetylenolpyruvoylglucosamine reductase from Streptococcus pneumoniae serotype 19F (strain G54).